Here is a 315-residue protein sequence, read N- to C-terminus: Pantothenate synthetase (315 aa).

45–52 (MGALHEGH) provides a ligand contact to ATP. H52 (proton donor) is an active-site residue. Q77 lines the (R)-pantoate pocket. Q77 is a binding site for beta-alanine. 163–166 (GEKD) provides a ligand contact to ATP. Position 169 (Q169) interacts with (R)-pantoate. Residues V192 and 200 to 203 (MSSR) contribute to the ATP site.

The protein belongs to the pantothenate synthetase family. In terms of assembly, homodimer.

It is found in the cytoplasm. The enzyme catalyses (R)-pantoate + beta-alanine + ATP = (R)-pantothenate + AMP + diphosphate + H(+). It participates in cofactor biosynthesis; (R)-pantothenate biosynthesis; (R)-pantothenate from (R)-pantoate and beta-alanine: step 1/1. Catalyzes the condensation of pantoate with beta-alanine in an ATP-dependent reaction via a pantoyl-adenylate intermediate. This Mycobacterium ulcerans (strain Agy99) protein is Pantothenate synthetase.